A 445-amino-acid polypeptide reads, in one-letter code: Peptide chain release factor 1, mitochondrial (445 aa).

Residues 1-61 (MNRHLCVWLF…LLSKNWSRRY (61 aa)) constitute a mitochondrion transit peptide. Residues 297–361 (PKDLRIDTFR…LRARLYQQII (65 aa)) form a GGQ domain region. A GGQ motif is present at residues 311 to 313 (GGQ). N5-methylglutamine is present on Q313.

The protein belongs to the prokaryotic/mitochondrial release factor family. Post-translationally, methylation of glutamine in the GGQ triplet by HEMK1 is conserved from bacteria to mammals.

It is found in the mitochondrion. Mitochondrial peptide chain release factor that directs the termination of translation in response to the peptide chain non-canonical stop codons AGG and AGA. Non-canonical termination codons AGG and AGA are found at the end of MT-CO1/COX1 and MT-ND6/ND6 open reading frames, respectively. Recognizes non-canonical stop codons via a network of interactions between the codon, MTRF1 and the ribosomal RNA (rRNA): in contrast to other translation release factors, which identify the codon in the A-site via direct interactions of amino acid side chains with the bases, MTRF1 repositions the first 2 bases of the stop codon to use an intricate network of interactions that includes residues of the release factor, the rRNA of the small ribosomal subunit, as well as neighboring bases of the mRNA. The protein is Peptide chain release factor 1, mitochondrial of Homo sapiens (Human).